A 205-amino-acid chain; its full sequence is uncharacterized protein (205 aa).

The protein belongs to the flavoredoxin family. FMN is required as a cofactor.

This is an uncharacterized protein from Bacillus subtilis (strain 168).